A 189-amino-acid chain; its full sequence is dCTP deaminase (189 aa).

DCTP is bound by residues 112–117, 136–138, Q157, Y171, and Q181; these read KSTYAR and TLE. E138 acts as the Proton donor/acceptor in catalysis.

It belongs to the dCTP deaminase family. Homotrimer.

The catalysed reaction is dCTP + H2O + H(+) = dUTP + NH4(+). It functions in the pathway pyrimidine metabolism; dUMP biosynthesis; dUMP from dCTP (dUTP route): step 1/2. Its function is as follows. Catalyzes the deamination of dCTP to dUTP. The protein is dCTP deaminase of Paraburkholderia xenovorans (strain LB400).